The following is a 776-amino-acid chain: MASLIYRQLLTNSYTVNLSDEIQEIGSAKSKNVTINPGPFAQTGYAPVNWGAGETNDSTTVEPLLDGPYRPTTFNPPTSYWVLLAPTVEGVVIQGTNNIDRWLATILIEPNVQTTNRIYNLFGQQVTLSVENTSQTQWKFIDVSKTTPTGSYTQHGPLFSTPKLYAVMKFSGRIYTYNGTTPNATTGYYSTTNYDTVNMTLFCDFYIIPRNQEEKCTEYINHGLPPIQNTRNVVPVSLSAREVVHTRAQVNEDIVVSKTSLWKEMQYNRDITIRFKFDRTIIKAGGLGYKWSEISFKPITYQYTYTRDGEQITAHTTCSVNGVNNFSYNGGSLPTDFAISRYEVIKENSFVYIDYWDDSQAFRNMVYVRSLAANLNTVTCTGGSYTFALPLGNYPVMTGGTVSLHPAGVTLSTQFTDFVSLNSLRFRFRLTVGEPSFSITRTRVSRLYGLPAANPNNQREYYEISGRFSLISLVPSNDDYQTPIMNSVTVRQDLERQLGELRDEFNSLSQQIAMSQLIDLALLPLDMFSMFSGIKSTIDAAKSMATNVMKRFKRSNLASSVSTLTDAMSDAASSVSRSSSIRSIGSSVSAWTEVSTSITDISTTVDTVSTQTATIAKRLRLKEIATQTDGMNFDDISAAVLKTKIDKSVQITPNTLPDIVTEASEKFIPNRTYRVINNDEVFEAGMDGKFFAYRVDTFDEIPFDVQKFADLVTDSPVISAIIDLKTLKNLKDNYGISKQQAFDLLRSDPKVLREFINQNNPIIRNRIENLIMQCRL.

Positions 65 to 224 (LDGPYRPTTF…KCTEYINHGL (160 aa)) are spike head. Residues Cys203 and Cys216 are joined by a disulfide bond. The tract at residues 248–479 (AQVNEDIVVS…LISLVPSNDD (232 aa)) is spike body and stalk (antigen domain). The DGE motif stretch occupies residues 308 to 310 (DGE). The DGE motif; interaction with ITGA2/ITGB1 heterodimer signature appears at 308 to 310 (DGE). Cys318 and Cys380 are disulfide-bonded. The interval 389 to 409 (LPLGNYPVMTGGTVSLHPAGV) is hydrophobic; possible role in virus entry into host cell. Residues 448–450 (YGL) carry the YGL motif; interaction with ITGA4 motif. The stretch at 484–518 (IMNSVTVRQDLERQLGELRDEFNSLSQQIAMSQLI) forms a coiled coil. The spike foot stretch occupies residues 510 to 776 (QQIAMSQLID…IENLIMQCRL (267 aa)). Positions 644–646 (KID) match the KID motif; interaction with HSPA8 motif.

The protein belongs to the rotavirus VP4 family. Homotrimer. VP4 adopts a dimeric appearance above the capsid surface, while forming a trimeric base anchored inside the capsid layer. Only hints of the third molecule are observed above the capsid surface. It probably performs a series of molecular rearrangements during viral entry. Prior to trypsin cleavage, it is flexible. The priming trypsin cleavage triggers its rearrangement into rigid spikes with approximate two-fold symmetry of their protruding parts. After an unknown second triggering event, cleaved VP4 may undergo another rearrangement, in which two VP5* subunits fold back on themselves and join a third subunit to form a tightly associated trimer, shaped like a folded umbrella. Interacts with VP6. Interacts with VP7. In terms of assembly, homotrimer. The trimer is coiled-coil stabilized by its C-terminus, however, its N-terminus, known as antigen domain or 'body', seems to be flexible allowing it to self-associate either as a dimer or a trimer. Proteolytic cleavage by trypsin results in activation of VP4 functions and greatly increases infectivity. The penetration into the host cell is dependent on trypsin treatment of VP4. It produces two peptides, VP5* and VP8* that remain associated with the virion. Cleavage of VP4 by trypsin probably occurs in vivo in the lumen of the intestine prior to infection of enterocytes. Trypsin seems to be incorporated into the three-layered viral particles but remains inactive as long as the viral outer capsid is intact and would only be activated upon the solubilization of the latter.

Its subcellular location is the virion. The protein resides in the host rough endoplasmic reticulum. It is found in the host cell membrane. It localises to the host cytoplasm. The protein localises to the host cytoskeleton. Its subcellular location is the host endoplasmic reticulum-Golgi intermediate compartment. Spike-forming protein that mediates virion attachment to the host epithelial cell receptors and plays a major role in cell penetration, determination of host range restriction and virulence. Rotavirus attachment and entry into the host cell probably involves multiple sequential contacts between the outer capsid proteins VP4 and VP7, and the cell receptors. It is subsequently lost, together with VP7, following virus entry into the host cell. Following entry into the host cell, low intracellular or intravesicular Ca(2+) concentration probably causes the calcium-stabilized VP7 trimers to dissociate from the virion. This step is probably necessary for the membrane-disrupting entry step and the release of VP4, which is locked onto the virion by VP7. During the virus exit from the host cell, VP4 seems to be required to target the newly formed virions to the host cell lipid rafts. In terms of biological role, forms the spike 'foot' and 'body' and acts as a membrane permeabilization protein that mediates release of viral particles from endosomal compartments into the cytoplasm. During entry, the part of VP5* that protrudes from the virus folds back on itself and reorganizes from a local dimer to a trimer. This reorganization may be linked to membrane penetration by exposing VP5* hydrophobic region. In integrin-dependent strains, VP5* targets the integrin heterodimer ITGA2/ITGB1 for cell attachment. Its function is as follows. Forms the head of the spikes and mediates the recognition of specific host cell surface glycans. It is the viral hemagglutinin and an important target of neutralizing antibodies. In sialic acid-dependent strains, VP8* binds to host cell sialic acid, most probably a ganglioside, providing the initial contact. In some other strains, VP8* mediates the attachment to histo-blood group antigens (HBGAs) for viral entry. This chain is Outer capsid protein VP4, found in Rotavirus A (isolate RVA/Pig/Australia/CRW-8/1987/G3P9[7]) (RV-A).